The following is a 187-amino-acid chain: uncharacterized protein (187 aa).

Residues Met-1–Ala-25 form the signal peptide.

It belongs to the fimbrial protein family.

Part of the yfcOPQRSUV fimbrial operon. Could contribute to adhesion to various surfaces in specific environmental niches. Increases adhesion to eukaryotic T24 bladder epithelial cells in the absence of fim genes. This is an uncharacterized protein from Escherichia coli (strain K12).